Here is a 170-residue protein sequence, read N- to C-terminus: tRNA-splicing endonuclease (170 aa).

Catalysis depends on residues Y106, H116, and K147.

This sequence belongs to the tRNA-intron endonuclease family. Archaeal short subfamily. In terms of assembly, homotetramer; although the tetramer contains four active sites, only two participate in the cleavage. Therefore, it should be considered as a dimer of dimers.

The catalysed reaction is pretRNA = a 3'-half-tRNA molecule with a 5'-OH end + a 5'-half-tRNA molecule with a 2',3'-cyclic phosphate end + an intron with a 2',3'-cyclic phosphate and a 5'-hydroxyl terminus.. Endonuclease that removes tRNA introns. Cleaves pre-tRNA at the 5'- and 3'-splice sites to release the intron. The products are an intron and two tRNA half-molecules bearing 2',3' cyclic phosphate and 5'-OH termini. Recognizes a pseudosymmetric substrate in which 2 bulged loops of 3 bases are separated by a stem of 4 bp. The protein is tRNA-splicing endonuclease of Methanothermobacter thermautotrophicus (strain ATCC 29096 / DSM 1053 / JCM 10044 / NBRC 100330 / Delta H) (Methanobacterium thermoautotrophicum).